The chain runs to 563 residues: Eukaryotic translation initiation factor 3 subunit D-1 (563 aa).

Residues V98–S167 are disordered. The span at K100 to N121 shows a compositional bias: basic residues. T128 is subject to Phosphothreonine. The segment at E291–P305 is RNA gate.

The protein belongs to the eIF-3 subunit D family. In terms of assembly, component of the eukaryotic translation initiation factor 3 (eIF-3) complex. The eIF-3 complex interacts with pix.

The protein resides in the cytoplasm. In terms of biological role, mRNA cap-binding component of the eukaryotic translation initiation factor 3 (eIF-3) complex, which is involved in protein synthesis of a specialized repertoire of mRNAs and, together with other initiation factors, stimulates binding of mRNA and methionyl-tRNAi to the 40S ribosome. The eIF-3 complex specifically targets and initiates translation of a subset of mRNAs involved in cell proliferation. In the eIF-3 complex, eif3d specifically recognizes and binds the 7-methylguanosine cap of a subset of mRNAs. The sequence is that of Eukaryotic translation initiation factor 3 subunit D-1 from Drosophila virilis (Fruit fly).